Consider the following 471-residue polypeptide: Protoporphyrinogen oxidase (471 aa).

FAD is bound by residues 16 to 21 (GGGISG), 39 to 40 (ES), Ala47, 61 to 64 (GPNS), Val251, Trp408, and 446 to 448 (VGL).

Belongs to the protoporphyrinogen/coproporphyrinogen oxidase family. Protoporphyrinogen oxidase subfamily. Monomer. Homodimer. FAD serves as cofactor.

It localises to the cytoplasm. It is found in the cell membrane. The catalysed reaction is protoporphyrinogen IX + 3 O2 = protoporphyrin IX + 3 H2O2. The protein operates within porphyrin-containing compound metabolism; protoporphyrin-IX biosynthesis; protoporphyrin-IX from protoporphyrinogen-IX: step 1/1. Its activity is regulated as follows. Strongly inhibited by acifluorfen. Functionally, catalyzes the 6-electron oxidation of protoporphyrinogen-IX to form protoporphyrin-IX. Does not oxidize coproporphyrinogen III. Involved in the classical protoporphyrin-dependent (PPD) heme b biosynthesis. This Myxococcus xanthus protein is Protoporphyrinogen oxidase.